A 1273-amino-acid chain; its full sequence is MADQRSKTNRWNWEVSGFEPRKSSSNASFAESTGHRTTGPLLRRNSISTPSLPPKQAIASKVNGLKEKVKLAKEDYLELRQEATDLQEYSNAKLDRVTRYLGVLAEKSRKLDQFVLETEARISPLINEKKRLFNDLLTAKGNIKVFCRARPLFEDEGPSVIEFPGDCTICVNTSDDTLSNPKKDFEFDRVYGPHVGQAALFSDVQPFVQSALDGSNVSILSYGQTNAGKTYTMEGSNHDRGLYARCFEELFDLANSDSTSTSRFSFSLSVFEIYNEQIRDLLSETQSNLPNINMDLHESVIELGQEKVDNPLEFLGVLKSAFLNRGNYKSKFNVTHLIVSIHIYYSNTITGENIYSKLSLVDLAGSEGLIMENDSGDHVTDLLHVMNSISALGDVLSSLTSGKDSIPYDNSILTRVLADSLGGSSKTLMIVNICPSVQTLSETISCLNYAARARNTVPSLGNRDTIKKWRDVASDARKELLEKERENQNLKQEVVGLKKALKDANDQCVLLYSEVQRAWKVSFTLQSDLKSENIMLVDKHRLEKEQNSQLRNQIAQFLQLDQEQKLQMQQQDSAIQNLQAKITDLESQVSEAVRSDTTRTGDALQSQDIFSPIPKAVEGTTDSSSVTKKLEEELKKRDALIERLHEENEKLFDRLTERSMAVSTQVLSPSLRASPNIQPANVNRGEGYSAEAVALPSTPNKNNGAITLVKSGTDLVKTTPAGEYLTAALNDFDPEEYEGLAAIADGANKLLMLVLAAVIKAGASREHEILAEIRDSVFSFIRKMEPRRVMDTMLVSRVRILYIRSLLARSPELQTIRVSPVECFLEKPNTGRSKSTSRGSSPGRSPVRYLDTQIHGFKVNIKAERRNKLASVVSRMRGLEQDAGRQQVTGVKLREMQDEAKSFAIGNKALAALFVHTPAGELQRQIRLWLAENFEFLSVTSDDVSGGNGGQLELLSTAIMDGWMAGLGAAVPPHTDALGQLLSEYAKRVYTSQMQHMKDIAGTLAAEEAEDAGQVSKLRSALESVDHKRRKILQQMKSDAALLNLEEGSSPIPNPSTAAEDSRLASLISLDGILKQVKEITRQASVHVLSKSKKKALLESLDELTERMPSLLDIDHPCAQREIATAHQLVETIPEQEDTNILEQSHDRRPSLESISSGETDVSQWNVLQFNTGSSAPFIIKCGGNNNSELVIKADARVQEPKGGEIVRVVPRPSVLVNMSLEEMKQMFVQLPEALSLLALARTADGTRARYSRLYKTLAMKVPSLKDLVSELE.

A disordered region spans residues 1–52; the sequence is MADQRSKTNRWNWEVSGFEPRKSSSNASFAESTGHRTTGPLLRRNSISTPSL. Residues 59 to 89 adopt a coiled-coil conformation; sequence ASKVNGLKEKVKLAKEDYLELRQEATDLQEY. The region spanning 142 to 456 is the Kinesin motor domain; sequence NIKVFCRARP…LNYAARARNT (315 aa). 223–230 provides a ligand contact to ATP; that stretch reads GQTNAGKT. 3 coiled-coil regions span residues 466 to 511, 559 to 595, and 627 to 657; these read IKKW…CVLL, QLDQEQKLQMQQQDSAIQNLQAKITDLESQVSEAVRS, and TKKLEEELKKRDALIERLHEENEKLFDRLTE. Disordered stretches follow at residues 827-847 and 1136-1157; these read KPNTGRSKSTSRGSSPGRSPV and QEDTNILEQSHDRRPSLESISS. The segment covering 830–846 has biased composition (low complexity); it reads TGRSKSTSRGSSPGRSP.

Belongs to the TRAFAC class myosin-kinesin ATPase superfamily. Kinesin family. KIN-14 subfamily. As to quaternary structure, homodimer and heterodimer with KCA2. Interacts with CDKA-1. Interacts with AL1, a geminivirus (TGMV) protein essential for viral replication. Interacts with LUE1/KSS. Post-translationally, part of the phosphorylation is not CDK-dependent. In terms of tissue distribution, widely expressed.

It localises to the nucleus. The protein resides in the cytoplasm. Its subcellular location is the cytoskeleton. The protein localises to the spindle. It is found in the chromosome. It localises to the cell membrane. The protein resides in the phragmoplast. In terms of biological role, kinesin-like protein required for chloroplast movements and anchor to the plasma membrane. Mediates chloroplast movement via chloroplast actin (cp-actin) filaments. Required for the chloroplast avoidance response under high intensity blue light. Mediates redundantly with CHUP1 the nuclear avoidance response under high intensity blue light. May act as a mitotic kinesin. Probably involved in division plane determination. The polypeptide is Kinesin-like protein KIN-14A (Arabidopsis thaliana (Mouse-ear cress)).